The sequence spans 1173 residues: MPGKMKTMDGNTAAAYVSYAFTDVTAIYPITPSTPMAESVDEWAAQGKKNLFGQTVKIMEMQSESGAAGAIHGALQAGALATTYTASQGLLLMTPNMYKIAGELLPAVFHVSARALATNSLNIFGDHQDSYAVRHTGCAMLAESSVQQVMDLAAVAHLTAIKGRIPFINFFDGFRTSHEIQKIEVLDYEDLAHLLDRDAVARFRQNALHPDHPVVRGTAQNPDIYFQEREASNKFYMALPEMVESYMAKISALTGREYHLFNYYGAPDAGRMIIAMGSVCETIQETVDYLNARGEKVGVLTVHLYRPFSLKHFFKYIPKSVSNIAVLDRTKEPGSLAEPLYLDVKSAFYNSDWRPVIVGGRYALGGKDILPSHIISIFDNLAAERPRDGFTVGINDDVTFTSLPLSDRDIDTSSSGTTACKFWGLGSDGTVGANKSAIKIIGDKTDMYAQAYFAYDSKKSGGVTMSHLRFGHNPIRSPYLIDKADFISCSQQSYVNKYHLLAGLKPGGTFLLNCSWDVAELDEKLPVAMKRYIAANDIQFYIVNAVGIAQKLGLGGRFNMIMQSAFFKLADIIPLTRAVEYLKQSIEHAYGNKGQKIVDMNNLAVDSGIESVVKISVPQAWKHLEDKVVSPKKLPAFIKDILIPMNRQEGDSLPVSIFDGIEDGTFPSGTSAYEKRGVAINVPVWQTDKCTQCNQCAFICPHAAIRPVLISEEERQNAPAGFSAKRASGTEDAWYRLAVSPLDCSGCGNCADVCPVKGKALSMQPLESQEHEIELWEYALSLTPKANPQNKFTVKGSQFEQPLLEFSGACGGCGETPYAKLVTQLFGDRMMIANATGCSSIWGASAPSIPYTTNHKGQGPTWANSLFEDNAEFGLGMLLGVDAIRDTLATQVKAALDNAPDVPLDAELSACLSDWLANKDQGEGTRERAEKVGDTSGFANAREKSRTPTVSMPHRDYLANGSHWIFGGDGWAYDIGFGGLDHVLASGKDVNVLVFDTEVYSNTGGQSSKSTPAAAIAQFACKKTRKKDLGMMAMSYGYVYVAQIAMGADKNQTLRAIAEAEAYPGPSLIIAYAACINHGLRIGMGCSQREARRAVEAGYWANYRYHPELKEAGKNPFILDSEEPEEDFQAFLAGEVRYSSLKKLYPEFAEFLFKKTEDDARERLEGYKKLASS.

4Fe-4S ferredoxin-type domains are found at residues 681–710 and 735–766; these read NVPV…PVLI and YRLA…MQPL. C690, C693, C696, C700, C744, C747, C750, C754, C810, C813, and C838 together coordinate [4Fe-4S] cluster. Over residues 922–933 the composition is skewed to basic and acidic residues; that stretch reads GEGTRERAEKVG. Positions 922–946 are disordered; the sequence is GEGTRERAEKVGDTSGFANAREKSR. C1075 contributes to the [4Fe-4S] cluster binding site.

It belongs to the pyruvate:ferredoxin/flavodoxin oxidoreductase family. [4Fe-4S] cluster serves as cofactor.

The enzyme catalyses oxidized [flavodoxin] + pyruvate + CoA + 2 H(+) = reduced [flavodoxin] + acetyl-CoA + CO2. Its function is as follows. Oxidoreductase required for the transfer of electrons from pyruvate to flavodoxin, which reduces nitrogenase. The polypeptide is Pyruvate-flavodoxin oxidoreductase (nifJ) (Enterobacter agglomerans (Erwinia herbicola)).